Here is a 160-residue protein sequence, read N- to C-terminus: Baculoviral IAP repeat-containing protein 5.1-A (160 aa).

One copy of the BIR repeat lies at 27 to 97; sequence RLATFADWPF…KRSANCGFLS (71 aa). Threonine 43 is modified (phosphothreonine; by CDK1). 4 residues coordinate Zn(2+): cysteine 66, cysteine 69, histidine 86, and cysteine 93.

This sequence belongs to the IAP family. As to quaternary structure, component of the CPC at least composed of survivin/birc5, incenp, cdca8/borealin and/or cdca9/dasra-A, and aurkb/aurora-B. Interacts directly with incenp (via N-terminus), and may weakly interact with aurkb (via N-terminus) to stabilize the complex. Interacts with GTP-bound ran in both the S and M phases of the cell cycle. Also found in a complex with ubiquitin-mediated signaling proteins including at least usp9x/xFAM, nploc4/npl4 and ufd1. In terms of processing, ubiquitination is required for centrosome-targeting.

It is found in the cytoplasm. It localises to the nucleus. The protein localises to the chromosome. Its subcellular location is the centromere. The protein resides in the cytoskeleton. It is found in the spindle. Component of the chromosomal passenger complex (CPC), a complex that acts as a key regulator of mitosis. The CPC complex has essential functions at the centromere in ensuring correct chromosome alignment and segregation and is required for chromatin-induced microtubule stabilization and spindle assembly. Stimulates the mitotic kinase activity of aurkb/aurora-B in the CPC. Does not appear to exhibit anti-apoptotic activity. In Xenopus laevis (African clawed frog), this protein is Baculoviral IAP repeat-containing protein 5.1-A (birc5.1-a).